The chain runs to 629 residues: Pumilio homolog 3 (629 aa).

Composition is skewed to basic residues over residues M1 to F10 and P18 to K37. The tract at residues M1–W92 is disordered. Basic and acidic residues predominate over residues K62–W92. The short motif at K88 to K100 is the Nuclear localization signal element. In terms of domain architecture, PUM-HD spans R120 to L473. 11 Pumilio repeats span residues H160–S195, K196–H231, S232–G260, P272–H308, S309–T344, H345–G380, E381–N418, K419–D487, K488–H534, P535–V579, and N580–S618.

As to expression, in adult, expressed at high levels in eye and ovary and at lower levels in brain, testis and head kidney. In the adult ovary, prominently expressed in early immature follicles.

The protein resides in the nucleus. The protein localises to the nucleolus. It is found in the nucleoplasm. Its subcellular location is the chromosome. Inhibits the poly(ADP-ribosyl)ation activity of PARP1 and the degradation of PARP1 by CASP3 following genotoxic stress. Binds to double-stranded RNA or DNA without sequence specificity. Involved in development of the eye and of primordial germ cells. In Danio rerio (Zebrafish), this protein is Pumilio homolog 3 (pum3).